A 236-amino-acid chain; its full sequence is Lipoprotein signal peptidase (236 aa).

The next 4 helical transmembrane spans lie at phenylalanine 8–phenylalanine 28, tryptophan 44–threonine 64, valine 68–leucine 88, and leucine 98–phenylalanine 118. Residues aspartate 141 and aspartate 174 contribute to the active site. The helical transmembrane segment at cysteine 166 to leucine 186 threads the bilayer.

The protein belongs to the peptidase A8 family.

It is found in the cell inner membrane. It catalyses the reaction Release of signal peptides from bacterial membrane prolipoproteins. Hydrolyzes -Xaa-Yaa-Zaa-|-(S,diacylglyceryl)Cys-, in which Xaa is hydrophobic (preferably Leu), and Yaa (Ala or Ser) and Zaa (Gly or Ala) have small, neutral side chains.. It participates in protein modification; lipoprotein biosynthesis (signal peptide cleavage). This protein specifically catalyzes the removal of signal peptides from prolipoproteins. This is Lipoprotein signal peptidase from Amoebophilus asiaticus (strain 5a2).